Here is a 465-residue protein sequence, read N- to C-terminus: tRNA modification GTPase MnmE (465 aa).

(6S)-5-formyl-5,6,7,8-tetrahydrofolate is bound by residues R23, E81, and K120. The region spanning 217–389 is the TrmE-type G domain; sequence GVHVVLAGRP…LIASLCDKVG (173 aa). A K(+)-binding site is contributed by N227. Residues 227–232, 246–252, and 271–274 contribute to the GTP site; these read NAGKSS, TDVAGTT, and DTAG. S231 provides a ligand contact to Mg(2+). 3 residues coordinate K(+): T246, V248, and T251. T252 provides a ligand contact to Mg(2+). Residue K465 participates in (6S)-5-formyl-5,6,7,8-tetrahydrofolate binding.

It belongs to the TRAFAC class TrmE-Era-EngA-EngB-Septin-like GTPase superfamily. TrmE GTPase family. Homodimer. Heterotetramer of two MnmE and two MnmG subunits. K(+) is required as a cofactor.

The protein resides in the cytoplasm. In terms of biological role, exhibits a very high intrinsic GTPase hydrolysis rate. Involved in the addition of a carboxymethylaminomethyl (cmnm) group at the wobble position (U34) of certain tRNAs, forming tRNA-cmnm(5)s(2)U34. This Psychrobacter sp. (strain PRwf-1) protein is tRNA modification GTPase MnmE.